Consider the following 304-residue polypeptide: Acetyl-coenzyme A carboxylase carboxyl transferase subunit beta (304 aa).

Residues 23-292 (VWTKCDSCGQ…PNPEAPREGV (270 aa)) form the CoA carboxyltransferase N-terminal domain. Positions 27, 30, 46, and 49 each coordinate Zn(2+). The segment at 27–49 (CDSCGQVLYRAELERNLEVCPKC) adopts a C4-type zinc-finger fold. The tract at residues 284–304 (NPEAPREGVVVPPVPDQEPEA) is disordered. A compositionally biased stretch (pro residues) spans 295–304 (PPVPDQEPEA).

Belongs to the AccD/PCCB family. As to quaternary structure, acetyl-CoA carboxylase is a heterohexamer composed of biotin carboxyl carrier protein (AccB), biotin carboxylase (AccC) and two subunits each of ACCase subunit alpha (AccA) and ACCase subunit beta (AccD). Zn(2+) serves as cofactor.

It localises to the cytoplasm. The enzyme catalyses N(6)-carboxybiotinyl-L-lysyl-[protein] + acetyl-CoA = N(6)-biotinyl-L-lysyl-[protein] + malonyl-CoA. It functions in the pathway lipid metabolism; malonyl-CoA biosynthesis; malonyl-CoA from acetyl-CoA: step 1/1. Component of the acetyl coenzyme A carboxylase (ACC) complex. Biotin carboxylase (BC) catalyzes the carboxylation of biotin on its carrier protein (BCCP) and then the CO(2) group is transferred by the transcarboxylase to acetyl-CoA to form malonyl-CoA. This chain is Acetyl-coenzyme A carboxylase carboxyl transferase subunit beta, found in Shigella boydii serotype 18 (strain CDC 3083-94 / BS512).